A 103-amino-acid polypeptide reads, in one-letter code: Large ribosomal subunit protein eL30 (103 aa).

This sequence belongs to the eukaryotic ribosomal protein eL30 family.

The protein is Large ribosomal subunit protein eL30 of Methanosarcina mazei (strain ATCC BAA-159 / DSM 3647 / Goe1 / Go1 / JCM 11833 / OCM 88) (Methanosarcina frisia).